Consider the following 461-residue polypeptide: Cysteine--tRNA ligase (461 aa).

C28 lines the Zn(2+) pocket. The 'HIGH' region signature appears at 30 to 40 (ITIYDLCHIGH). Zn(2+)-binding residues include C209, H234, and E238. The 'KMSKS' region signature appears at 266 to 270 (KMSKS). Residue K269 coordinates ATP.

This sequence belongs to the class-I aminoacyl-tRNA synthetase family. Monomer. Requires Zn(2+) as cofactor.

The protein resides in the cytoplasm. It catalyses the reaction tRNA(Cys) + L-cysteine + ATP = L-cysteinyl-tRNA(Cys) + AMP + diphosphate. The chain is Cysteine--tRNA ligase from Yersinia pestis bv. Antiqua (strain Antiqua).